A 250-amino-acid polypeptide reads, in one-letter code: UPF0259 membrane protein bbp_256 (250 aa).

6 helical membrane passes run 21 to 41 (PIIVTFVLLSSTITVVIDSII), 86 to 106 (FSLLIGSTFLLGNLITFIQMT), 125 to 145 (FFKLLQLIFTTTIITQLGFLL), 146 to 166 (YFIPGFTTIILFSLSPIILLI), 188 to 208 (IIVPAIIFWLCFKIFIILIIS), and 216 to 236 (FLAYFILNLCINFISSILIIY).

It belongs to the UPF0259 family.

Its subcellular location is the cell membrane. The protein is UPF0259 membrane protein bbp_256 of Buchnera aphidicola subsp. Baizongia pistaciae (strain Bp).